A 494-amino-acid chain; its full sequence is Anaerobic nitric oxide reductase flavorubredoxin (494 aa).

The segment at T30 to I210 is zinc metallo-hydrolase. Residues H79, E81, D83, H147, D166, and H227 each coordinate Fe cation. Positions I254 to A393 constitute a Flavodoxin-like domain. Residues S260 to N264 and A342 to I369 contribute to the FMN site. Residues C441–Y492 form the Rubredoxin-like domain. Fe cation is bound by residues C446, C449, C479, and C482.

The protein in the N-terminal section; belongs to the zinc metallo-hydrolase group 3 family. In terms of assembly, homotetramer. Requires Fe cation as cofactor. FMN is required as a cofactor.

Its subcellular location is the cytoplasm. It functions in the pathway nitrogen metabolism; nitric oxide reduction. Anaerobic nitric oxide reductase; uses NADH to detoxify nitric oxide (NO), protecting several 4Fe-4S NO-sensitive enzymes. Has at least 2 reductase partners, only one of which (NorW, flavorubredoxin reductase) has been identified. NO probably binds to the di-iron center; electrons enter from the NorW at rubredoxin and are transferred sequentially to the FMN center and the di-iron center. Also able to function as an aerobic oxygen reductase. The protein is Anaerobic nitric oxide reductase flavorubredoxin of Vibrio vulnificus (strain YJ016).